The primary structure comprises 162 residues: Phosphopantetheine adenylyltransferase (162 aa).

Residue S9 coordinates substrate. ATP is bound by residues 9-10 (SF) and H17. The substrate site is built by K41, I77, and K91. ATP is bound by residues 92-94 (GLR), E102, and 126-132 (YAFLSSS).

It belongs to the bacterial CoaD family. As to quaternary structure, homohexamer. Mg(2+) is required as a cofactor.

Its subcellular location is the cytoplasm. It carries out the reaction (R)-4'-phosphopantetheine + ATP + H(+) = 3'-dephospho-CoA + diphosphate. Its pathway is cofactor biosynthesis; coenzyme A biosynthesis; CoA from (R)-pantothenate: step 4/5. Reversibly transfers an adenylyl group from ATP to 4'-phosphopantetheine, yielding dephospho-CoA (dPCoA) and pyrophosphate. In Frankia casuarinae (strain DSM 45818 / CECT 9043 / HFP020203 / CcI3), this protein is Phosphopantetheine adenylyltransferase.